A 359-amino-acid chain; its full sequence is 4-dedimethylamino-4-oxo-anhydrotetracycline transaminase OxyQ (359 aa).

3 residues coordinate substrate: Gly32, Lys92, and Asn155. Pyridoxal 5'-phosphate-binding positions include 91-92, Asn155, Tyr186, and 216-218; these read TK and SLS. The residue at position 219 (Lys219) is an N6-(pyridoxal phosphate)lysine. Arg227 serves as a coordination point for pyridoxal 5'-phosphate. Arg341 is a binding site for substrate.

The protein belongs to the class-I pyridoxal-phosphate-dependent aminotransferase family. Requires pyridoxal 5'-phosphate as cofactor.

It functions in the pathway antibiotic biosynthesis; oxytetracycline biosynthesis. Functionally, involved in the biosynthesis of the tetracycline antibiotic, oxytetracycline. Catalyzes the conversion of 4-dedimethylamino-4-oxoanhydrotetracycline to yield 4-amino-4-de(dimethylamino)anhydrotetracycline (4-amino-ATC). The chain is 4-dedimethylamino-4-oxo-anhydrotetracycline transaminase OxyQ from Streptomyces rimosus.